Consider the following 72-residue polypeptide: UPF0352 protein swp_2271 (72 aa).

The protein belongs to the UPF0352 family.

This chain is UPF0352 protein swp_2271, found in Shewanella piezotolerans (strain WP3 / JCM 13877).